The chain runs to 185 residues: TATA-box-binding protein 2 (185 aa).

Repeat copies occupy residues 7 to 84 (IENI…ANEL) and 100 to 178 (VQNV…KTQL).

The protein belongs to the TBP family.

In terms of biological role, general factor that plays a role in the activation of archaeal genes transcribed by RNA polymerase. Binds specifically to the TATA box promoter element which lies close to the position of transcription initiation. This is TATA-box-binding protein 2 from Methanosarcina acetivorans (strain ATCC 35395 / DSM 2834 / JCM 12185 / C2A).